The following is a 31-amino-acid chain: Cytochrome b6-f complex subunit 6 (31 aa).

The chain crosses the membrane as a helical span at residues 4–24 (LTSYFGFLLAALTITFVLFIG).

Belongs to the PetL family. As to quaternary structure, the 4 large subunits of the cytochrome b6-f complex are cytochrome b6, subunit IV (17 kDa polypeptide, PetD), cytochrome f and the Rieske protein, while the 4 small subunits are PetG, PetL, PetM and PetN. The complex functions as a dimer.

The protein resides in the plastid. It is found in the chloroplast thylakoid membrane. Its function is as follows. Component of the cytochrome b6-f complex, which mediates electron transfer between photosystem II (PSII) and photosystem I (PSI), cyclic electron flow around PSI, and state transitions. PetL is important for photoautotrophic growth as well as for electron transfer efficiency and stability of the cytochrome b6-f complex. This is Cytochrome b6-f complex subunit 6 from Oxybasis rubra (Red goosefoot).